Consider the following 255-residue polypeptide: Alkaline ceramidase (255 aa).

Residues 1–28 (MADGISSFWGPVTSTIECCEMNYAYSSY) lie on the Lumenal side of the membrane. The chain crosses the membrane as a helical span at residues 29–49 (IAEFYNTISNVPGILLALIGL). The Cytoplasmic segment spans residues 50-60 (VNALRQRFEKR). The helical transmembrane segment at 61 to 81 (FSILHISNMILAIGSMLYHAT) threads the bilayer. His-79 is a binding site for Zn(2+). The Lumenal segment spans residues 82-91 (LQHVQQQSDE). Residues 92-112 (TPMVWEILLYMYILYSPDWHY) traverse the membrane as a helical segment. At 113 to 118 (RSTMPT) the chain is on the cytoplasmic side. The next 2 membrane-spanning stretches (helical) occupy residues 119–139 (FLFLYGAAFAIVHAYLRFGIG) and 140–160 (FKVHYVILCLLCIPRMYKYYI). Over 161–169 (HTEDTAAKR) the chain is Cytoplasmic. The helical transmembrane segment at 170–192 (IAKWYVATILVGSICWFCDRVFC) threads the bilayer. The Lumenal portion of the chain corresponds to 193-205 (KTISQWPVNPQGH). Positions 205 and 209 each coordinate Zn(2+). Residues 206-226 (ALWHVFMSFNSYCANTFLMFC) traverse the membrane as a helical segment. Residues 227 to 255 (RAQQRGWNPKVKYFLGVLPYVKIEKPKTQ) lie on the Cytoplasmic side of the membrane.

Belongs to the alkaline ceramidase family. Requires Zn(2+) as cofactor. As to expression, mostly expressed in roots, shoot meristems and pollen, and, to a lower extent, in mature leaves.

It is found in the endoplasmic reticulum membrane. It localises to the golgi apparatus membrane. In terms of biological role, hydrolyzes only phytoceramide into phytosphingosine and free fatty acid. Does not have reverse activity. Affects plant morphogenesis. Required for the formation of wax layer that ensure cuticle permeability. Implicated in abscisic acid (ABA)-mediated stomatal closure. Involved in both biotic and abiotic stresses. Promotes salt resistance and defenses responses toward pathogenic bacteria (e.g. P.syringae) and against the fungal toxin fumonisin B1 (FB1). The polypeptide is Alkaline ceramidase (Arabidopsis thaliana (Mouse-ear cress)).